Here is a 119-residue protein sequence, read N- to C-terminus: uncharacterized protein (119 aa).

A run of 2 helical transmembrane segments spans residues 53-73 (AATI…SFLA) and 92-112 (FITH…WFLF).

It is found in the membrane. This is an uncharacterized protein from Saccharomyces cerevisiae (strain ATCC 204508 / S288c) (Baker's yeast).